The following is a 141-amino-acid chain: MPRTTKRLLDKLREVEALRGDGRSPPRGMLSRFGKGMVAFLREYVRILAYHLSVGPFPRLSKIIAAVGLAVSGPGVLYKVIEAIIAGEVRNRGAVIATAKEEPFEFYTMTLIVGSGAAFVTALGVAAFLVLILKGRPSRSE.

2 consecutive transmembrane segments (helical) span residues 64 to 84 and 112 to 132; these read IAAV…IEAI and IVGS…LVLI.

Its subcellular location is the cell membrane. This is an uncharacterized protein from Sinorhizobium fredii (strain NBRC 101917 / NGR234).